The primary structure comprises 120 residues: C-C motif chemokine 27 (120 aa).

An N-terminal signal peptide occupies residues 1–25 (MMEGLSPASSLPLLLLLLSPAPEAA). Disulfide bonds link Cys34–Cys63 and Cys35–Cys78.

Belongs to the intercrine beta (chemokine CC) family. In terms of assembly, monomer, dimer, and tetramer. Heparin avidly promotes oligomerization. Interacts with TNFAIP6 (via Link domain). In terms of tissue distribution, isoform 1 is predominantly expressed in placenta and weakly in skin. Isoform 2 is predominantly expressed in testes and brain, weakly in kidney and liver and even lower in heart and muscle. Low expression of both isoforms in other tissues.

The protein localises to the secreted. It localises to the nucleus. Chemotactic factor that attracts skin-associated memory T-lymphocytes. May play a role in mediating homing of lymphocytes to cutaneous sites. May play a role in cell migration during embryogenesis. Nuclear forms may facilitate cellular migration by inducing cytoskeletal relaxation. Binds to CCR10. The chain is C-C motif chemokine 27 (Ccl27) from Mus musculus (Mouse).